The following is a 580-amino-acid chain: D-erythrulose kinase (580 aa).

Residues 7–327 enclose the DhaK domain; that stretch reads DPARFTEDML…WAAPADTPAY (321 aa). His-217 functions as the Tele-hemiaminal-histidine intermediate in the catalytic mechanism. Residues 329–360 are disordered; the sequence is KGAAQQHVSGERRSEATARSASSGPKLAELSD. The 203-residue stretch at 368-570 folds into the DhaL domain; sequence RLVARAFDAM…LALCARTVAD (203 aa). Residues 397–403, 443–444, Gly-485, Arg-542, and 555–557 contribute to the ATP site; these read DGDHGRG, TS, and DAG.

The catalysed reaction is D-erythrulose + ATP = D-erythrulose 4-phosphate + ADP + H(+). The protein operates within carbohydrate metabolism; erythritol degradation. It functions in the pathway carbohydrate metabolism; D-threitol degradation. Functionally, catalyzes the phosphorylation of D-erythrulose to D-erythrulose-4P. Involved in the degradation pathways of erythritol and D-threitol, that allow M.smegmatis to grow on these compounds as the sole carbon source. In Mycolicibacterium smegmatis (strain ATCC 700084 / mc(2)155) (Mycobacterium smegmatis), this protein is D-erythrulose kinase.